Reading from the N-terminus, the 297-residue chain is Pyridoxal 5'-phosphate synthase subunit Pdx1 (297 aa).

Aspartate 27 contributes to the D-ribose 5-phosphate binding site. Residue lysine 84 is the Schiff-base intermediate with D-ribose 5-phosphate of the active site. A D-ribose 5-phosphate-binding site is contributed by glycine 156. Position 168 (arginine 168) interacts with D-glyceraldehyde 3-phosphate. Residues glycine 217 and 238-239 (GS) each bind D-ribose 5-phosphate.

It belongs to the PdxS/SNZ family. In terms of assembly, homohexamer and homododecamer. In the presence of Pdx2, forms a dodecamer of heterodimers.

It catalyses the reaction aldehydo-D-ribose 5-phosphate + D-glyceraldehyde 3-phosphate + L-glutamine = pyridoxal 5'-phosphate + L-glutamate + phosphate + 3 H2O + H(+). It functions in the pathway cofactor biosynthesis; pyridoxal 5'-phosphate biosynthesis. Functionally, catalyzes the formation of pyridoxal 5'-phosphate from ribose 5-phosphate (RBP), glyceraldehyde 3-phosphate (G3P) and ammonia. The ammonia is provided by Pdx2. Can also use ribulose 5-phosphate and dihydroxyacetone phosphate as substrates, resulting from enzyme-catalyzed isomerization of RBP and G3P, respectively. The protein is Pyridoxal 5'-phosphate synthase subunit Pdx1 of Plasmodium berghei.